The chain runs to 174 residues: Peptide deformylase (174 aa).

2 residues coordinate Fe cation: cysteine 96 and histidine 138. The active site involves glutamate 139. Histidine 142 serves as a coordination point for Fe cation.

The protein belongs to the polypeptide deformylase family. Fe(2+) serves as cofactor.

The catalysed reaction is N-terminal N-formyl-L-methionyl-[peptide] + H2O = N-terminal L-methionyl-[peptide] + formate. Removes the formyl group from the N-terminal Met of newly synthesized proteins. Requires at least a dipeptide for an efficient rate of reaction. N-terminal L-methionine is a prerequisite for activity but the enzyme has broad specificity at other positions. In Helicobacter pylori (strain HPAG1), this protein is Peptide deformylase.